A 397-amino-acid polypeptide reads, in one-letter code: MKHVLRKEKTLEISATLVLKDGTIFYGKSVGIQGETYGEIVFNTSMTGYQEILTDPSYSNQIITFTYPHIGNVGINKNDCESNVIHAKGLIVRDISSIYSNHRSQMSLLNYLLNQKIIVISNIDTRKLTRILRTTGSQYGYITTKKIHSIINVLKHINILDNPITNKDLVKQVSTKKFYIWKKNVNKQKNNNITNAKLKEKIWHVVVYDFGVKKNILNMLTHRNCYLTVIPADTSAEKVLQILPDGIFLSNGPGDPRSCTYALNAINAFLKINIPIFGICLGHQLLALASGAKIIKMKFGHHGSNHPVKELKSNTVMITSQNHNYTVDTNNLPKNINITHISLFDGSIQGLQRNDKHAFSFQGHPEASPGPHDSMILFDKFIKLMKKSYNSQQKTII.

The segment at 1 to 204 is CPSase; sequence MKHVLRKEKT…NAKLKEKIWH (204 aa). The L-glutamine site is built by Ser57, Gly252, and Gly254. The 188-residue stretch at 204–391 folds into the Glutamine amidotransferase type-1 domain; that stretch reads HVVVYDFGVK…IKLMKKSYNS (188 aa). The Nucleophile role is filled by Cys280. L-glutamine is bound by residues Leu281, Gln284, Asn322, and Tyr325. Catalysis depends on residues His364 and Glu366.

The protein belongs to the CarA family. In terms of assembly, composed of two chains; the small (or glutamine) chain promotes the hydrolysis of glutamine to ammonia, which is used by the large (or ammonia) chain to synthesize carbamoyl phosphate. Tetramer of heterodimers (alpha,beta)4.

The catalysed reaction is hydrogencarbonate + L-glutamine + 2 ATP + H2O = carbamoyl phosphate + L-glutamate + 2 ADP + phosphate + 2 H(+). It catalyses the reaction L-glutamine + H2O = L-glutamate + NH4(+). It functions in the pathway amino-acid biosynthesis; L-arginine biosynthesis; carbamoyl phosphate from bicarbonate: step 1/1. The protein operates within pyrimidine metabolism; UMP biosynthesis via de novo pathway; (S)-dihydroorotate from bicarbonate: step 1/3. Small subunit of the glutamine-dependent carbamoyl phosphate synthetase (CPSase). CPSase catalyzes the formation of carbamoyl phosphate from the ammonia moiety of glutamine, carbonate, and phosphate donated by ATP, constituting the first step of 2 biosynthetic pathways, one leading to arginine and/or urea and the other to pyrimidine nucleotides. The small subunit (glutamine amidotransferase) binds and cleaves glutamine to supply the large subunit with the substrate ammonia. The chain is Carbamoyl phosphate synthase small chain from Buchnera aphidicola subsp. Baizongia pistaciae (strain Bp).